The chain runs to 131 residues: Profilin-10 (131 aa).

A disulfide bridge connects residues Cys-13 and Cys-115. Positions 81–97 match the Involved in PIP2 interaction motif; the sequence is AVIRGKKGSGGITVKKT. Thr-111 carries the phosphothreonine modification.

The protein belongs to the profilin family. In terms of assembly, occurs in many kinds of cells as a complex with monomeric actin in a 1:1 ratio. Post-translationally, phosphorylated by MAP kinases.

It is found in the cytoplasm. The protein localises to the cytoskeleton. Functionally, binds to actin and affects the structure of the cytoskeleton. At high concentrations, profilin prevents the polymerization of actin, whereas it enhances it at low concentrations. The polypeptide is Profilin-10 (Zea mays (Maize)).